Here is a 392-residue protein sequence, read N- to C-terminus: Chaperone protein DnaJ (392 aa).

The region spanning 5–75 (DYYEVLGIDK…QKKQQYDQFG (71 aa)) is the J domain. The CR-type zinc-finger motif lies at 148-229 (GVEKTIKYKR…CHGTGTAKET (82 aa)). Positions 161, 164, 177, 180, 203, 206, 217, and 220 each coordinate Zn(2+). CXXCXGXG motif repeat units follow at residues 161–168 (CENCHGTG), 177–184 (CPTCNGQG), 203–210 (CPDCHGTG), and 217–224 (CKHCHGTG).

This sequence belongs to the DnaJ family. As to quaternary structure, homodimer. The cofactor is Zn(2+).

The protein localises to the cytoplasm. In terms of biological role, participates actively in the response to hyperosmotic and heat shock by preventing the aggregation of stress-denatured proteins and by disaggregating proteins, also in an autonomous, DnaK-independent fashion. Unfolded proteins bind initially to DnaJ; upon interaction with the DnaJ-bound protein, DnaK hydrolyzes its bound ATP, resulting in the formation of a stable complex. GrpE releases ADP from DnaK; ATP binding to DnaK triggers the release of the substrate protein, thus completing the reaction cycle. Several rounds of ATP-dependent interactions between DnaJ, DnaK and GrpE are required for fully efficient folding. Also involved, together with DnaK and GrpE, in the DNA replication of plasmids through activation of initiation proteins. The sequence is that of Chaperone protein DnaJ from Fusobacterium nucleatum subsp. nucleatum (strain ATCC 25586 / DSM 15643 / BCRC 10681 / CIP 101130 / JCM 8532 / KCTC 2640 / LMG 13131 / VPI 4355).